Reading from the N-terminus, the 190-residue chain is Lipid A acyltransferase PagP (190 aa).

An N-terminal signal peptide occupies residues 1-18 (MKRLISCLTIICALNASA). Active-site residues include His60, Asp103, and Ser104.

It belongs to the lipid A palmitoyltransferase family. As to quaternary structure, homodimer.

Its subcellular location is the cell outer membrane. It catalyses the reaction a lipid A + a 1,2-diacyl-sn-glycero-3-phosphocholine = a hepta-acyl lipid A + a 2-acyl-sn-glycero-3-phosphocholine. It carries out the reaction a lipid IVA + a 1,2-diacyl-sn-glycero-3-phosphocholine = a lipid IVB + a 2-acyl-sn-glycero-3-phosphocholine. The catalysed reaction is a lipid IIA + a 1,2-diacyl-sn-glycero-3-phosphocholine = a lipid IIB + a 2-acyl-sn-glycero-3-phosphocholine. Its function is as follows. Transfers a fatty acid residue from the sn-1 position of a phospholipid to the N-linked hydroxyfatty acid chain on the proximal unit of lipid A or its precursors. In Legionella pneumophila serogroup 1 (strain 2300/99 Alcoy), this protein is Lipid A acyltransferase PagP.